Reading from the N-terminus, the 495-residue chain is Aspartyl/glutamyl-tRNA(Asn/Gln) amidotransferase subunit B (495 aa).

It belongs to the GatB/GatE family. GatB subfamily. As to quaternary structure, heterotrimer of A, B and C subunits.

It catalyses the reaction L-glutamyl-tRNA(Gln) + L-glutamine + ATP + H2O = L-glutaminyl-tRNA(Gln) + L-glutamate + ADP + phosphate + H(+). The catalysed reaction is L-aspartyl-tRNA(Asn) + L-glutamine + ATP + H2O = L-asparaginyl-tRNA(Asn) + L-glutamate + ADP + phosphate + 2 H(+). In terms of biological role, allows the formation of correctly charged Asn-tRNA(Asn) or Gln-tRNA(Gln) through the transamidation of misacylated Asp-tRNA(Asn) or Glu-tRNA(Gln) in organisms which lack either or both of asparaginyl-tRNA or glutaminyl-tRNA synthetases. The reaction takes place in the presence of glutamine and ATP through an activated phospho-Asp-tRNA(Asn) or phospho-Glu-tRNA(Gln). The sequence is that of Aspartyl/glutamyl-tRNA(Asn/Gln) amidotransferase subunit B from Beijerinckia indica subsp. indica (strain ATCC 9039 / DSM 1715 / NCIMB 8712).